The sequence spans 139 residues: Putative pre-16S rRNA nuclease (139 aa).

The protein belongs to the YqgF nuclease family.

It localises to the cytoplasm. Could be a nuclease involved in processing of the 5'-end of pre-16S rRNA. This is Putative pre-16S rRNA nuclease from Streptococcus pyogenes serotype M3 (strain ATCC BAA-595 / MGAS315).